Here is a 382-residue protein sequence, read N- to C-terminus: Gap junction alpha-1 protein (382 aa).

Residues 2–23 (GDWSALGKLLDKVQAYSTAGGK) are Cytoplasmic-facing. Serine 5 carries the post-translational modification Phosphoserine. A helical membrane pass occupies residues 24–44 (VWLSVLFIFRILLLGTAVESA). At 45–76 (WGDEQSAFRCNTQQPGCENVCYDKSFPISHVR) the chain is on the extracellular side. 2 disulfide bridges follow: cysteine 54–cysteine 192 and cysteine 187–cysteine 198. Residues 77–97 (FWVLQIIFVSVPTLLYLAHVF) form a helical membrane-spanning segment. The Cytoplasmic portion of the chain corresponds to 98–155 (YVMRKEEKLNKKEEELKVAQTDGVNVEMHLKQIEIKKFKYGIEEHGKVKMRGGLLRTY). Lysine 144 is covalently cross-linked (Glycyl lysine isopeptide (Lys-Gly) (interchain with G-Cter in SUMO)). A helical transmembrane segment spans residues 156 to 176 (IISILFKSVFEVAFLLIQWYI). Residues 177–207 (YGFSLSAVYTCKRDPCPHQVDCFLSRPTEKT) lie on the Extracellular side of the membrane. Residues 208–228 (IFIIFMLVVSLVSLALNIIEL) form a helical membrane-spanning segment. Residues 229–382 (FYAFFKGVKD…SRPRPDDLEI (154 aa)) are Cytoplasmic-facing. Lysine 237 participates in a covalent cross-link: Glycyl lysine isopeptide (Lys-Gly) (interchain with G-Cter in SUMO). The segment at 244–382 (SDPYHATTGP…SRPRPDDLEI (139 aa)) is interaction with NOV. Tyrosine 247 carries the phosphotyrosine modification. Residues serine 255, serine 257, and serine 262 each carry the phosphoserine modification. The tract at residues 264 to 382 (KYAYFNGCSS…SRPRPDDLEI (119 aa)) is interaction with UBQLN4. Residue cysteine 271 is modified to S-nitrosocysteine. Threonine 275 is subject to Phosphothreonine. A phosphoserine mark is found at serine 306 and serine 314. A compositionally biased stretch (polar residues) spans 317–332 (QNRMGQAGSTISNSHA). A disordered region spans residues 317–382 (QNRMGQAGST…SRPRPDDLEI (66 aa)). Serine 325 is subject to Phosphoserine; by CK1. Threonine 326 carries the post-translational modification Phosphothreonine. Serine 328 and serine 330 each carry phosphoserine; by CK1. The segment covering 342-351 (QNSKKLDAGH) has biased composition (basic and acidic residues). 2 positions are modified to phosphoserine: serine 344 and serine 365. Low complexity predominate over residues 362–374 (RPSSRASSRASSR). Serine 368 is modified (phosphoserine; by PKC/PRKCG and PKC/PRKCD). Phosphoserine is present on residues serine 369 and serine 373.

Belongs to the connexin family. Alpha-type (group II) subfamily. In terms of assembly, a connexon is composed of a hexamer of connexins. Interacts with SGSM3. Interacts with RIC1/CIP150. Interacts with CNST and CSNK1D. Interacts (via C-terminus) with TJP1. Interacts (via C-terminus) with SRC (via SH3 domain). Interacts (not ubiquitinated) with UBQLN4 (via UBA domain). Interacts with NOV. Interacts with TMEM65. Interacts with ANK3/ANKG and PKP2. In terms of processing, phosphorylation at Ser-325, Ser-328 and Ser-330 by CK1 modulates gap junction assembly. Phosphorylated at Ser-368 by PRKCG; phosphorylation induces disassembly of gap junction plaques and inhibition of gap junction activity. Phosphorylation at Ser-368 by PRKCD triggers its internalization into small vesicles leading to proteasome-mediated degradation. Sumoylated with SUMO1, SUMO2 and SUMO3, which may regulate the level of functional Cx43 gap junctions at the plasma membrane. May be desumoylated by SENP1 or SENP2. Post-translationally, S-nitrosylation at Cys-271 is enriched at the muscle endothelial gap junction in arteries, it augments channel permeability and may regulate of smooth muscle cell to endothelial cell communication. In terms of processing, acetylated in the developing cortex; leading to delocalization from the cell membrane.

It is found in the cell membrane. Its subcellular location is the cell junction. The protein resides in the gap junction. It localises to the endoplasmic reticulum. Gap junction protein that acts as a regulator of bladder capacity. A gap junction consists of a cluster of closely packed pairs of transmembrane channels, the connexons, through which materials of low MW diffuse from one cell to a neighboring cell. May play a critical role in the physiology of hearing by participating in the recycling of potassium to the cochlear endolymph. Negative regulator of bladder functional capacity: acts by enhancing intercellular electrical and chemical transmission, thus sensitizing bladder muscles to cholinergic neural stimuli and causing them to contract. May play a role in cell growth inhibition through the regulation of NOV expression and localization. Plays an essential role in gap junction communication in the ventricles. This is Gap junction alpha-1 protein (GJA1) from Sus scrofa (Pig).